The following is a 443-amino-acid chain: Thymidine phosphorylase (443 aa).

This sequence belongs to the thymidine/pyrimidine-nucleoside phosphorylase family. Homodimer.

It carries out the reaction thymidine + phosphate = 2-deoxy-alpha-D-ribose 1-phosphate + thymine. It participates in pyrimidine metabolism; dTMP biosynthesis via salvage pathway; dTMP from thymine: step 1/2. Its function is as follows. The enzymes which catalyze the reversible phosphorolysis of pyrimidine nucleosides are involved in the degradation of these compounds and in their utilization as carbon and energy sources, or in the rescue of pyrimidine bases for nucleotide synthesis. The sequence is that of Thymidine phosphorylase from Shewanella frigidimarina (strain NCIMB 400).